The following is a 478-amino-acid chain: UDP-N-acetylmuramate--L-alanine ligase (478 aa).

Residue 122-128 (GTHGKTT) participates in ATP binding.

It belongs to the MurCDEF family.

The protein localises to the cytoplasm. It catalyses the reaction UDP-N-acetyl-alpha-D-muramate + L-alanine + ATP = UDP-N-acetyl-alpha-D-muramoyl-L-alanine + ADP + phosphate + H(+). It functions in the pathway cell wall biogenesis; peptidoglycan biosynthesis. Its function is as follows. Cell wall formation. The protein is UDP-N-acetylmuramate--L-alanine ligase of Stenotrophomonas maltophilia (strain R551-3).